Here is a 280-residue protein sequence, read N- to C-terminus: Phosphonates import ATP-binding protein PhnC 1 (280 aa).

One can recognise an ABC transporter domain in the interval 2-246; sequence LRIENLDKRY…VLTRIYGEED (245 aa). 35–42 lines the ATP pocket; the sequence is GPSGAGKS. A disordered region spans residues 247–266; that stretch reads WSKTSDEDADSVDAPPRAAD.

The protein belongs to the ABC transporter superfamily. Phosphonates importer (TC 3.A.1.9.1) family. The complex is composed of two ATP-binding proteins (PhnC), two transmembrane proteins (PhnE) and a solute-binding protein (PhnD).

It is found in the cell inner membrane. The catalysed reaction is phosphonate(out) + ATP + H2O = phosphonate(in) + ADP + phosphate + H(+). Functionally, part of the ABC transporter complex PhnCDE involved in phosphonates import. Responsible for energy coupling to the transport system. The sequence is that of Phosphonates import ATP-binding protein PhnC 1 from Rhodopseudomonas palustris (strain HaA2).